The chain runs to 235 residues: Phosphoribosylformylglycinamidine synthase subunit PurQ (235 aa).

The 231-residue stretch at 4–234 (GILVFPGTNC…VQHLTGRVIR (231 aa)) folds into the Glutamine amidotransferase type-1 domain. Catalysis depends on Cys-86, which acts as the Nucleophile. Active-site residues include His-203 and Glu-205.

As to quaternary structure, part of the FGAM synthase complex composed of 1 PurL, 1 PurQ and 2 PurS subunits.

Its subcellular location is the cytoplasm. The catalysed reaction is N(2)-formyl-N(1)-(5-phospho-beta-D-ribosyl)glycinamide + L-glutamine + ATP + H2O = 2-formamido-N(1)-(5-O-phospho-beta-D-ribosyl)acetamidine + L-glutamate + ADP + phosphate + H(+). It catalyses the reaction L-glutamine + H2O = L-glutamate + NH4(+). Its pathway is purine metabolism; IMP biosynthesis via de novo pathway; 5-amino-1-(5-phospho-D-ribosyl)imidazole from N(2)-formyl-N(1)-(5-phospho-D-ribosyl)glycinamide: step 1/2. Functionally, part of the phosphoribosylformylglycinamidine synthase complex involved in the purines biosynthetic pathway. Catalyzes the ATP-dependent conversion of formylglycinamide ribonucleotide (FGAR) and glutamine to yield formylglycinamidine ribonucleotide (FGAM) and glutamate. The FGAM synthase complex is composed of three subunits. PurQ produces an ammonia molecule by converting glutamine to glutamate. PurL transfers the ammonia molecule to FGAR to form FGAM in an ATP-dependent manner. PurS interacts with PurQ and PurL and is thought to assist in the transfer of the ammonia molecule from PurQ to PurL. The polypeptide is Phosphoribosylformylglycinamidine synthase subunit PurQ (Symbiobacterium thermophilum (strain DSM 24528 / JCM 14929 / IAM 14863 / T)).